A 103-amino-acid chain; its full sequence is Putative double-stranded DNA mimic protein HAPS_1002 (103 aa).

It belongs to the putative dsDNA mimic protein family.

May act as a double-stranded DNA (dsDNA) mimic. Probably regulates the activity of a dsDNA-binding protein. This Glaesserella parasuis serovar 5 (strain SH0165) (Haemophilus parasuis) protein is Putative double-stranded DNA mimic protein HAPS_1002.